Reading from the N-terminus, the 234-residue chain is Ras-related protein Rab-20 (234 aa).

5 residues coordinate GTP: glycine 17, lysine 18, threonine 19, aspartate 32, and threonine 36. Threonine 19 provides a ligand contact to Mg(2+). Short sequence motifs (switch) lie at residues 28–41 (RRFP…GGAF) and 55–72 (DTAG…YCRG). 2 residues coordinate Mg(2+): threonine 36 and aspartate 55. GTP-binding residues include glycine 58, asparagine 113, lysine 114, and aspartate 116. The segment at 125–144 (GQEKEECSPNMDAGDRVSPR) is disordered. Basic and acidic residues predominate over residues 126–142 (QEKEECSPNMDAGDRVS). GTP contacts are provided by alanine 184 and lysine 185. A disordered region spans residues 212–234 (RPSHTVDISSHKPPKRTRSGCCA). A compositionally biased stretch (basic residues) spans 223 to 234 (KPPKRTRSGCCA). Residues cysteine 232 and cysteine 233 are each lipidated (S-geranylgeranyl cysteine).

The protein belongs to the small GTPase superfamily. Rab family. It depends on Mg(2+) as a cofactor. Low or absent expression in normal pancreas and stronger expression in 15 of 18 exocrine pancreatic adenocarcinomas (at protein level).

It localises to the golgi apparatus. Its subcellular location is the cytoplasmic vesicle. The protein resides in the phagosome. It is found in the phagosome membrane. It catalyses the reaction GTP + H2O = GDP + phosphate + H(+). Its activity is regulated as follows. Regulated by guanine nucleotide exchange factors (GEFs) which promote the exchange of bound GDP for free GTP. Regulated by GTPase activating proteins (GAPs) which increase the GTP hydrolysis activity. Inhibited by GDP dissociation inhibitors (GDIs). In terms of biological role, the small GTPases Rab are key regulators of intracellular membrane trafficking, from the formation of transport vesicles to their fusion with membranes. Rabs cycle between an inactive GDP-bound form and an active GTP-bound form that is able to recruit to membranes different sets of downstream effectors directly responsible for vesicle formation, movement, tethering and fusion. RAB20 plays a role in apical endocytosis/recycling. Plays a role in the maturation and acidification of phagosomes that engulf pathogens, such as S.aureus and M.tuberculosis. Plays a role in the fusion of phagosomes with lysosomes. This chain is Ras-related protein Rab-20, found in Homo sapiens (Human).